A 200-amino-acid polypeptide reads, in one-letter code: Large ribosomal subunit protein uL4 (200 aa).

The tract at residues 38-72 (GRQGTKQQKTRSDVAGGGKRPWRQKGTGRARAGTT) is disordered.

This sequence belongs to the universal ribosomal protein uL4 family. As to quaternary structure, part of the 50S ribosomal subunit.

Functionally, one of the primary rRNA binding proteins, this protein initially binds near the 5'-end of the 23S rRNA. It is important during the early stages of 50S assembly. It makes multiple contacts with different domains of the 23S rRNA in the assembled 50S subunit and ribosome. In terms of biological role, forms part of the polypeptide exit tunnel. The sequence is that of Large ribosomal subunit protein uL4 from Pseudomonas putida (strain ATCC 700007 / DSM 6899 / JCM 31910 / BCRC 17059 / LMG 24140 / F1).